A 213-amino-acid chain; its full sequence is Thymidylate kinase (213 aa).

10-17 (GLEGAGKT) is a binding site for ATP.

This sequence belongs to the thymidylate kinase family.

It carries out the reaction dTMP + ATP = dTDP + ADP. Phosphorylation of dTMP to form dTDP in both de novo and salvage pathways of dTTP synthesis. This Escherichia coli O7:K1 (strain IAI39 / ExPEC) protein is Thymidylate kinase.